The following is a 258-amino-acid chain: Adenosylcobinamide-GDP ribazoletransferase (258 aa).

Transmembrane regions (helical) follow at residues phenylalanine 41–serine 61, proline 65–phenylalanine 85, isoleucine 115–methionine 135, alanine 136–serine 156, leucine 197–alanine 217, and cysteine 236–threonine 256.

This sequence belongs to the CobS family. Requires Mg(2+) as cofactor.

Its subcellular location is the cell inner membrane. It carries out the reaction alpha-ribazole + adenosylcob(III)inamide-GDP = adenosylcob(III)alamin + GMP + H(+). It catalyses the reaction alpha-ribazole 5'-phosphate + adenosylcob(III)inamide-GDP = adenosylcob(III)alamin 5'-phosphate + GMP + H(+). The protein operates within cofactor biosynthesis; adenosylcobalamin biosynthesis; adenosylcobalamin from cob(II)yrinate a,c-diamide: step 7/7. Joins adenosylcobinamide-GDP and alpha-ribazole to generate adenosylcobalamin (Ado-cobalamin). Also synthesizes adenosylcobalamin 5'-phosphate from adenosylcobinamide-GDP and alpha-ribazole 5'-phosphate. The polypeptide is Adenosylcobinamide-GDP ribazoletransferase (Ralstonia nicotianae (strain ATCC BAA-1114 / GMI1000) (Ralstonia solanacearum)).